A 217-amino-acid chain; its full sequence is Small ribosomal subunit protein uS3 (217 aa).

The 69-residue stretch at 38–106 (IRKFINKELA…QVHINIIEIK (69 aa)) folds into the KH type-2 domain.

The protein belongs to the universal ribosomal protein uS3 family. In terms of assembly, part of the 30S ribosomal subunit. Forms a tight complex with proteins S10 and S14.

Binds the lower part of the 30S subunit head. Binds mRNA in the 70S ribosome, positioning it for translation. The sequence is that of Small ribosomal subunit protein uS3 from Streptococcus equi subsp. equi (strain 4047).